The sequence spans 126 residues: Holo-[acyl-carrier-protein] synthase (126 aa).

Mg(2+)-binding residues include Asp9 and Glu57.

It belongs to the P-Pant transferase superfamily. AcpS family. Mg(2+) serves as cofactor.

It is found in the cytoplasm. It carries out the reaction apo-[ACP] + CoA = holo-[ACP] + adenosine 3',5'-bisphosphate + H(+). Transfers the 4'-phosphopantetheine moiety from coenzyme A to a Ser of acyl-carrier-protein. The protein is Holo-[acyl-carrier-protein] synthase of Alteromonas mediterranea (strain DSM 17117 / CIP 110805 / LMG 28347 / Deep ecotype).